We begin with the raw amino-acid sequence, 845 residues long: Protein translocase subunit SecA 1 (845 aa).

Residues Gln85, 103 to 107 (GEGKT), and Asp492 each bind ATP.

The protein belongs to the SecA family. As to quaternary structure, monomer and homodimer. Part of the essential Sec protein translocation apparatus which comprises SecA, SecYEG and auxiliary proteins SecDF. Other proteins may also be involved.

The protein localises to the cell membrane. It localises to the cytoplasm. The catalysed reaction is ATP + H2O + cellular proteinSide 1 = ADP + phosphate + cellular proteinSide 2.. Functionally, part of the Sec protein translocase complex. Interacts with the SecYEG preprotein conducting channel. Has a central role in coupling the hydrolysis of ATP to the transfer of proteins into and across the cell membrane, serving as an ATP-driven molecular motor driving the stepwise translocation of polypeptide chains across the membrane. This chain is Protein translocase subunit SecA 1, found in Corynebacterium efficiens (strain DSM 44549 / YS-314 / AJ 12310 / JCM 11189 / NBRC 100395).